A 1167-amino-acid chain; its full sequence is Tight junction protein 2 (1167 aa).

Residues 10–97 enclose the PDZ 1 domain; that stretch reads TVTLQKDSKR…IAAIVVKRPR (88 aa). Phosphoserine occurs at positions 107, 127, 130, 140, 145, 147, 173, 194, 205, and 239. The interval 129-195 is disordered; it reads RSGYSERSRH…SRERSRGRSL (67 aa). The segment at 225-286 is disordered; that stretch reads SYHEAYEPDY…KGQHDPDRPI (62 aa). A compositionally biased stretch (basic and acidic residues) spans 242–262; it reads YDRRAHPETRYERSRSREHLR. The region spanning 287 to 365 is the PDZ 2 domain; that stretch reads GVLLTKSKAN…KLQLVVLRDS (79 aa). A phosphoserine mark is found at serine 305, serine 378, serine 380, serine 386, serine 395, serine 404, serine 410, and serine 411. A disordered region spans residues 381 to 485; that stretch reads EVEDISEIES…LRPSPEDEAI (105 aa). The span at 395–426 shows a compositional bias: basic and acidic residues; it reads SPEERRQQYSDQDYHSSTEKLKERPSSREETS. Position 435 is a phosphothreonine (threonine 435). Serine 479 carries the phosphoserine modification. Positions 489 to 570 constitute a PDZ 3 domain; that stretch reads NTKMVRFKKG…GETVTILAQS (82 aa). Tyrosine 554 carries the post-translational modification Phosphotyrosine. The SH3 domain maps to 584–649; that stretch reads GDSFFIRSHF…PNKSRAEQMA (66 aa). In terms of domain architecture, Guanylate kinase-like spans 660 to 858; sequence GDRADFWRMR…WFGSLKDSIQ (199 aa). Residues serine 684 and serine 884 each carry the phosphoserine modification. Phosphothreonine is present on threonine 887. Serine 895 and serine 902 each carry phosphoserine. Disordered stretches follow at residues 904-1055 and 1095-1167; these read FEDT…PRSV and YAVP…DTEL. Phosphothreonine occurs at positions 907 and 915. Basic and acidic residues predominate over residues 938–949; the sequence is VQHEENIRKSSP. Phosphoserine occurs at positions 948, 960, 968, 988, and 1044. Over residues 976 to 990 the composition is skewed to basic and acidic residues; that stretch reads EPPKARSQNREDSFD. The span at 1037–1049 shows a compositional bias: acidic residues; that stretch reads ESEEVGESTEEQE. Tyrosine 1095 is subject to Phosphotyrosine. Serine 1124 and serine 1136 each carry phosphoserine. The segment at 1165-1167 is interaction with SCRIB; sequence TEL.

The protein belongs to the MAGUK family. As to quaternary structure, homodimer. Interacts (via PDZ2 domain) with TJP1/ZO1 (via PDZ2 domain). Interacts with UBN1. Interacts with SCRIB. Interacts with OCLN. Interacts with SAFB in the nucleus. Interacts with USP53 (via the C-terminal region). Interacts with claudins, including CLDN1, CLDN2, CLDN3, CLDN5 and CLDN7. Interacts with CLDN18. Interacts (via N-terminus) with CTNNA1.

Its subcellular location is the cell junction. The protein localises to the adherens junction. The protein resides in the cell membrane. It is found in the nucleus. It localises to the tight junction. Functionally, plays a role in tight junctions and adherens junctions. Acts as a positive regulator of RANKL-induced osteoclast differentiation, potentially via mediating downstream transcriptional activity. The protein is Tight junction protein 2 of Mus musculus (Mouse).